The sequence spans 169 residues: UPF0303 protein BMEI0598 (169 aa).

The protein belongs to the UPF0303 family.

This is UPF0303 protein BMEI0598 from Brucella melitensis biotype 1 (strain ATCC 23456 / CCUG 17765 / NCTC 10094 / 16M).